A 101-amino-acid polypeptide reads, in one-letter code: Small ribosomal subunit protein uS14 (101 aa).

Belongs to the universal ribosomal protein uS14 family. In terms of assembly, part of the 30S ribosomal subunit. Contacts proteins S3 and S10.

Functionally, binds 16S rRNA, required for the assembly of 30S particles and may also be responsible for determining the conformation of the 16S rRNA at the A site. The protein is Small ribosomal subunit protein uS14 of Polaromonas naphthalenivorans (strain CJ2).